Consider the following 291-residue polypeptide: Acetyl-coenzyme A carboxylase carboxyl transferase subunit beta (291 aa).

The region spanning 23-291 (VWHKCPSCTA…PPDLPVEESV (269 aa)) is the CoA carboxyltransferase N-terminal domain. 4 residues coordinate Zn(2+): C27, C30, C46, and C49. The C4-type zinc-finger motif lies at 27–49 (CPSCTAVLYRVELERNLEVCPKC).

Belongs to the AccD/PCCB family. Acetyl-CoA carboxylase is a heterohexamer composed of biotin carboxyl carrier protein (AccB), biotin carboxylase (AccC) and two subunits each of ACCase subunit alpha (AccA) and ACCase subunit beta (AccD). Zn(2+) is required as a cofactor.

The protein localises to the cytoplasm. The enzyme catalyses N(6)-carboxybiotinyl-L-lysyl-[protein] + acetyl-CoA = N(6)-biotinyl-L-lysyl-[protein] + malonyl-CoA. It participates in lipid metabolism; malonyl-CoA biosynthesis; malonyl-CoA from acetyl-CoA: step 1/1. Component of the acetyl coenzyme A carboxylase (ACC) complex. Biotin carboxylase (BC) catalyzes the carboxylation of biotin on its carrier protein (BCCP) and then the CO(2) group is transferred by the transcarboxylase to acetyl-CoA to form malonyl-CoA. The sequence is that of Acetyl-coenzyme A carboxylase carboxyl transferase subunit beta from Coxiella burnetii (strain RSA 331 / Henzerling II).